A 794-amino-acid chain; its full sequence is EVI5-like protein (794 aa).

A compositionally biased stretch (polar residues) spans 1–30; that stretch reads MASPTLSPDSSSQEALSAPTCSPTSDSENL. Disordered stretches follow at residues 1–36 and 49–75; these read MASP…DELE and EADS…SSSA. Positions 55-75 are enriched in low complexity; sequence MRSMNGSRRNSGSSLVSSSSA. One can recognise a Rab-GAP TBC domain in the interval 115 to 300; it reads GIPHHFRAIV…RVFDIFMYEG (186 aa). Coiled coils occupy residues 358–449 and 569–709; these read KKMK…QQEN and EAQA…LKGP. At Ser685 the chain carries Phosphoserine. The tract at residues 766–794 is disordered; that stretch reads LERPAKDSEGSSDSDADELAAPYSQGLDN.

As to quaternary structure, may interact with RAB10.

Its function is as follows. Functions as a GTPase-activating protein (GAP) with a broad specificity. This is EVI5-like protein (EVI5L) from Homo sapiens (Human).